We begin with the raw amino-acid sequence, 640 residues long: Probable potassium transport system protein Kup (640 aa).

12 helical membrane passes run 26 to 46 (IAGLAVAAVGVVYGDIGTSPL), 69 to 89 (ILSLVFWALVLVVSAKYVLFI), 117 to 137 (AWVLSALGVFGAALFYGDGMI), 155 to 175 (PAFRPYVLPIALAVLCGLFVI), 186 to 206 (IFGPVMLVWFVLLAVLGIAGI), 224 to 244 (FFADMPLVGWLSLGAVVLAIT), 265 to 285 (WFLVVFPSLYLNYLGQGALIL), 297 to 317 (LLVPDALVYPMVAMATLATII), 355 to 375 (IYVPSINWMLLGAVVALVVGF), 384 to 404 (AYGIAVTLTMMIDTLLAFVVV), 415 to 435 (AGLFLGVFLAVDVAFFSATTV), and 437 to 457 (ILAGGWFPLLVGALIFTLLTT).

Belongs to the HAK/KUP transporter (TC 2.A.72) family.

The protein localises to the cell inner membrane. It catalyses the reaction K(+)(in) + H(+)(in) = K(+)(out) + H(+)(out). In terms of biological role, transport of potassium into the cell. Likely operates as a K(+):H(+) symporter. This Aromatoleum aromaticum (strain DSM 19018 / LMG 30748 / EbN1) (Azoarcus sp. (strain EbN1)) protein is Probable potassium transport system protein Kup.